The following is a 67-amino-acid chain: Probable Sec-independent protein translocase protein TatE (67 aa).

The helical transmembrane segment at 4–21 (ISITKLLVVAALVVLLFG) threads the bilayer.

This sequence belongs to the TatA/E family. TatE subfamily.

The protein localises to the cell inner membrane. In terms of biological role, part of the twin-arginine translocation (Tat) system that transports large folded proteins containing a characteristic twin-arginine motif in their signal peptide across membranes. TatE shares overlapping functions with TatA. This chain is Probable Sec-independent protein translocase protein TatE, found in Enterobacter cloacae subsp. cloacae (strain ATCC 13047 / DSM 30054 / NBRC 13535 / NCTC 10005 / WDCM 00083 / NCDC 279-56).